The primary structure comprises 121 residues: Large ribosomal subunit protein bL12 (121 aa).

Belongs to the bacterial ribosomal protein bL12 family. As to quaternary structure, homodimer. Part of the ribosomal stalk of the 50S ribosomal subunit. Forms a multimeric L10(L12)X complex, where L10 forms an elongated spine to which 2 to 4 L12 dimers bind in a sequential fashion. Binds GTP-bound translation factors.

Functionally, forms part of the ribosomal stalk which helps the ribosome interact with GTP-bound translation factors. Is thus essential for accurate translation. This chain is Large ribosomal subunit protein bL12, found in Mesomycoplasma hyopneumoniae (strain 232) (Mycoplasma hyopneumoniae).